The chain runs to 268 residues: Undecaprenyl-diphosphatase (268 aa).

The next 7 membrane-spanning stretches (helical) occupy residues 42-62 (VPGKVFEVVIQLGAILAICVL), 86-106 (AIFVALIPAGLLGVLYHDFIL), 108-128 (VLFTPYVVCAALITGGIAIVV), 158-178 (IALVPGVSRSGATILGALLVG), 184-204 (AAEFSFFLAIPVMLGASVVSL), 218-238 (LIAAGFIAAFISALLVVKWLV), and 246-266 (FTVFGWYRILFGSLLLIYFSL).

This sequence belongs to the UppP family.

The protein resides in the cell inner membrane. The enzyme catalyses di-trans,octa-cis-undecaprenyl diphosphate + H2O = di-trans,octa-cis-undecaprenyl phosphate + phosphate + H(+). Its function is as follows. Catalyzes the dephosphorylation of undecaprenyl diphosphate (UPP). Confers resistance to bacitracin. This is Undecaprenyl-diphosphatase from Parvibaculum lavamentivorans (strain DS-1 / DSM 13023 / NCIMB 13966).